The primary structure comprises 342 residues: Erlin-1 (342 aa).

Over 1–6 (MAHVGA) the chain is Cytoplasmic. A helical transmembrane segment spans residues 7–23 (VVAAMAGLMAILLHSSI). The Lumenal portion of the chain corresponds to 24–342 (HKIEEGHLAV…ASKPKASEGH (319 aa)). N-linked (GlcNAc...) asparagine glycosylation is present at N106. The interval 308-342 (SSASRPAAGESEQLESLSMRESLKKASKPKASEGH) is disordered.

It belongs to the band 7/mec-2 family.

Its subcellular location is the endoplasmic reticulum membrane. Mediates the endoplasmic reticulum-associated degradation (ERAD) of inositol 1,4,5-trisphosphate receptors (IP3Rs). Involved in regulation of cellular cholesterol homeostasis by regulation the SREBP signaling pathway. Binds cholesterol and may promote ER retention of the SCAP-SREBF complex. The sequence is that of Erlin-1 from Danio rerio (Zebrafish).